The following is a 297-amino-acid chain: Nicotinate-nucleotide pyrophosphorylase [carboxylating] (297 aa).

The segment at 8-12 is important for hexamer formation; that stretch reads LLLPP. Residues Arg102, 138-139, 160-161, Lys171, Glu201, Asp222, 248-250, and Gly270 contribute to the quinolinate site; these read RK, HR, and SGG.

This sequence belongs to the NadC/ModD family. In terms of assembly, hexamer formed by 3 homodimers.

The catalysed reaction is nicotinate beta-D-ribonucleotide + CO2 + diphosphate = quinolinate + 5-phospho-alpha-D-ribose 1-diphosphate + 2 H(+). It functions in the pathway cofactor biosynthesis; NAD(+) biosynthesis; nicotinate D-ribonucleotide from quinolinate: step 1/1. Activity toward QA is slightly repressed by phosphoribosylpyrophosphate (PRPP) in both a competitive and a non-competitive manner. Competitively inhibited by phthalic acid (PHT). Involved in the catabolism of quinolinic acid (QA). The chain is Nicotinate-nucleotide pyrophosphorylase [carboxylating] (QPRT) from Homo sapiens (Human).